Consider the following 147-residue polypeptide: uncharacterized protein (147 aa).

An N-acetyltransferase domain is found at 1–147 (MEIRRADKDD…RPESGGSGSE (147 aa)).

The protein belongs to the acetyltransferase family.

This is an uncharacterized protein from Archaeoglobus fulgidus (strain ATCC 49558 / DSM 4304 / JCM 9628 / NBRC 100126 / VC-16).